The primary structure comprises 155 residues: uncharacterized protein (155 aa).

Residues Ile4–Phe65 form the HTH asnC-type domain. Positions Leu23–Glu42 form a DNA-binding region, H-T-H motif.

This is an uncharacterized protein from Pyrococcus abyssi (strain GE5 / Orsay).